We begin with the raw amino-acid sequence, 1397 residues long: ABC transporter G family member 41 (1397 aa).

An ABC transporter 1 domain is found at 138 to 411 (SLSKFVCSKK…FEGCGFKCPE (274 aa)). Position 171-178 (171-178 (GPPGCGKT)) interacts with ATP. Residues 489–701 (EMLKACSRRE…AEIGLTANEF (213 aa)) form the ABC transmembrane type-2 1 domain. A run of 6 helical transmembrane segments spans residues 507-527 (FIYL…MTVF), 549-570 (ALFR…RLGV), 594-614 (IPLS…VIGY), 625-645 (FIIL…IASI), 651-671 (ACSI…GFVI), and 735-755 (TAFG…TLAL). Positions 805–1050 (VTFQNVQYYI…VIKYFESIPG (246 aa)) constitute an ABC transporter 2 domain. 842–849 (GVSGAGKT) provides a ligand contact to ATP. The 215-residue stretch at 1122 to 1336 (GQLKACLWKQ…VLEGLLSSQY (215 aa)) folds into the ABC transmembrane type-2 2 domain. The next 7 helical transmembrane spans lie at 1141-1161 (HNLT…LLFW), 1173-1193 (LFSI…NNCA), 1229-1249 (VPYS…MIGY), 1260-1280 (LYSI…MVAL), 1286-1306 (MALT…GFVM), 1314-1334 (WWIW…LLSS), and 1369-1389 (VVAF…AFFM).

It belongs to the ABC transporter superfamily. ABCG family. PDR (TC 3.A.1.205) subfamily. In terms of tissue distribution, confined to roots.

The protein resides in the membrane. May be a general defense protein. The sequence is that of ABC transporter G family member 41 (ABCG41) from Arabidopsis thaliana (Mouse-ear cress).